The following is a 106-amino-acid chain: Thiosulfate sulfurtransferase GlpE (106 aa).

Positions 17 to 105 (QLPSVCLADI…WRHVYPYTAT (89 aa)) constitute a Rhodanese domain. Cysteine 65 functions as the Cysteine persulfide intermediate in the catalytic mechanism.

Belongs to the GlpE family.

The protein localises to the cytoplasm. It catalyses the reaction thiosulfate + hydrogen cyanide = thiocyanate + sulfite + 2 H(+). The enzyme catalyses thiosulfate + [thioredoxin]-dithiol = [thioredoxin]-disulfide + hydrogen sulfide + sulfite + 2 H(+). In terms of biological role, transferase that catalyzes the transfer of sulfur from thiosulfate to thiophilic acceptors such as cyanide or dithiols. May function in a CysM-independent thiosulfate assimilation pathway by catalyzing the conversion of thiosulfate to sulfite, which can then be used for L-cysteine biosynthesis. In Tolumonas auensis (strain DSM 9187 / NBRC 110442 / TA 4), this protein is Thiosulfate sulfurtransferase GlpE.